The following is a 544-amino-acid chain: Chaperonin GroEL (544 aa).

Residues 30-33, Lys-51, 87-91, Gly-415, 479-481, and Asp-495 each bind ATP; these read TLGP, DGTTT, and NAA.

It belongs to the chaperonin (HSP60) family. As to quaternary structure, forms a cylinder of 14 subunits composed of two heptameric rings stacked back-to-back. Interacts with the co-chaperonin GroES.

Its subcellular location is the cytoplasm. It catalyses the reaction ATP + H2O + a folded polypeptide = ADP + phosphate + an unfolded polypeptide.. Together with its co-chaperonin GroES, plays an essential role in assisting protein folding. The GroEL-GroES system forms a nano-cage that allows encapsulation of the non-native substrate proteins and provides a physical environment optimized to promote and accelerate protein folding. In Francisella tularensis subsp. tularensis (strain WY96-3418), this protein is Chaperonin GroEL.